The sequence spans 355 residues: Ribosomal RNA large subunit methyltransferase M (355 aa).

S-adenosyl-L-methionine-binding positions include Ser-191, 224-227, Asp-243, Asp-263, and Asp-279; that span reads APGG. Residue Lys-308 is the Proton acceptor of the active site.

This sequence belongs to the class I-like SAM-binding methyltransferase superfamily. RNA methyltransferase RlmE family. RlmM subfamily. In terms of assembly, monomer.

It localises to the cytoplasm. It catalyses the reaction cytidine(2498) in 23S rRNA + S-adenosyl-L-methionine = 2'-O-methylcytidine(2498) in 23S rRNA + S-adenosyl-L-homocysteine + H(+). Catalyzes the 2'-O-methylation at nucleotide C2498 in 23S rRNA. This Stenotrophomonas maltophilia (strain K279a) protein is Ribosomal RNA large subunit methyltransferase M.